A 382-amino-acid chain; its full sequence is MAGRNWLDTFGRAKSLDVNADLDRGYEAALLIQSLELEYYGDRPIRPDLELSVPSSVQATVLRKFRAAISVCRASLDKLEYQRGELDPQELRQLQLIESVVNRYSPRRTASAPTISRSPDPLPRSLLGIFDTLRRQLNPTAEATLVAGFRRRRDSTLISLKVLLLLILVPLLVQQVSRTYIISPAVDRYAPDLPFLSYPKPQLEEQAVEKLRVYKAEIEFDALLRGDSIPTQEELQKKLSAKAEELKQEADSESTHAVKNVIADLAATVAFVVVCVFSREELRVLRGFFDEAVYGLSDSAKAFAIILFTDIFVGFHSPEGWTVLLDGIANHFGFPARENFILLFIATFPVILATIFKYWIFRYLNRVSPSSVATLRGMNGGG.

A run of 4 helical transmembrane segments spans residues 156–176 (TLIS…VQQV), 257–277 (AVKN…VCVF), 305–325 (IILF…TVLL), and 340–360 (FILL…KYWI).

Belongs to the CemA family.

Its subcellular location is the cell inner membrane. Its function is as follows. Required for H(+) efflux immediately after light irradiation to form a rapid H(+) concentration gradient across the thylakoid membranes. Together with PxcL, contributes to transient H(+) uptake following dark to light transition. The sequence is that of Proton extrusion protein PxcA from Synechococcus sp. (strain WH7803).